The following is a 151-amino-acid chain: Ribosome maturation factor RimP (151 aa).

Belongs to the RimP family.

The protein resides in the cytoplasm. Functionally, required for maturation of 30S ribosomal subunits. The polypeptide is Ribosome maturation factor RimP (Saccharophagus degradans (strain 2-40 / ATCC 43961 / DSM 17024)).